The chain runs to 153 residues: Probable histone H2A.4 (153 aa).

A compositionally biased stretch (basic residues) spans 1-12 (MDSGTKVKKGAA). 2 disordered regions span residues 1–30 (MDSG…RSVK) and 129–153 (KSEK…PKKS). The span at 133–147 (AASTTKTPKSPSKAT) shows a compositional bias: low complexity. An SPKK motif motif is present at residues 149–152 (SPKK).

Belongs to the histone H2A family. The nucleosome is a histone octamer containing two molecules each of H2A, H2B, H3 and H4 assembled in one H3-H4 heterotetramer and two H2A-H2B heterodimers. The octamer wraps approximately 147 bp of DNA. Post-translationally, not ubiquitinated.

It localises to the nucleus. The protein resides in the chromosome. Its function is as follows. Core component of nucleosome. Nucleosomes wrap and compact DNA into chromatin, limiting DNA accessibility to the cellular machineries which require DNA as a template. Histones thereby play a central role in transcription regulation, DNA repair, DNA replication and chromosomal stability. DNA accessibility is regulated via a complex set of post-translational modifications of histones, also called histone code, and nucleosome remodeling. This is Probable histone H2A.4 from Arabidopsis thaliana (Mouse-ear cress).